The following is a 517-amino-acid chain: Crotonobetaine/carnitine--CoA ligase (517 aa).

It belongs to the ATP-dependent AMP-binding enzyme family.

The enzyme catalyses 4-(trimethylamino)butanoate + ATP + CoA = 4-(trimethylamino)butanoyl-CoA + AMP + diphosphate. It carries out the reaction crotonobetaine + ATP + CoA = crotonobetainyl-CoA + AMP + diphosphate. It catalyses the reaction (R)-carnitine + ATP + CoA = (R)-carnitinyl-CoA + AMP + diphosphate. The protein operates within amine and polyamine metabolism; carnitine metabolism. Its function is as follows. Catalyzes the transfer of CoA to carnitine, generating the initial carnitinyl-CoA needed for the CaiB reaction cycle. Also has activity toward crotonobetaine and gamma-butyrobetaine. This is Crotonobetaine/carnitine--CoA ligase from Escherichia fergusonii (strain ATCC 35469 / DSM 13698 / CCUG 18766 / IAM 14443 / JCM 21226 / LMG 7866 / NBRC 102419 / NCTC 12128 / CDC 0568-73).